A 114-amino-acid polypeptide reads, in one-letter code: Nucleoid-associated protein NT01CX_0824 (114 aa).

This sequence belongs to the YbaB/EbfC family. Homodimer.

The protein resides in the cytoplasm. It localises to the nucleoid. Binds to DNA and alters its conformation. May be involved in regulation of gene expression, nucleoid organization and DNA protection. The sequence is that of Nucleoid-associated protein NT01CX_0824 from Clostridium novyi (strain NT).